The following is a 355-amino-acid chain: Peptide chain release factor 1 (355 aa).

Q231 carries the N5-methylglutamine modification. Positions 281–291 are enriched in basic and acidic residues; it reads ERLAKESEARK. The segment at 281-302 is disordered; that stretch reads ERLAKESEARKSQVGSGDRSER.

The protein belongs to the prokaryotic/mitochondrial release factor family. Post-translationally, methylated by PrmC. Methylation increases the termination efficiency of RF1.

The protein localises to the cytoplasm. Its function is as follows. Peptide chain release factor 1 directs the termination of translation in response to the peptide chain termination codons UAG and UAA. The sequence is that of Peptide chain release factor 1 from Campylobacter jejuni subsp. doylei (strain ATCC BAA-1458 / RM4099 / 269.97).